The following is a 246-amino-acid chain: 5-oxoprolinase subunit A (246 aa).

This sequence belongs to the LamB/PxpA family. In terms of assembly, forms a complex composed of PxpA, PxpB and PxpC.

The enzyme catalyses 5-oxo-L-proline + ATP + 2 H2O = L-glutamate + ADP + phosphate + H(+). Its function is as follows. Catalyzes the cleavage of 5-oxoproline to form L-glutamate coupled to the hydrolysis of ATP to ADP and inorganic phosphate. The chain is 5-oxoprolinase subunit A from Cupriavidus metallidurans (strain ATCC 43123 / DSM 2839 / NBRC 102507 / CH34) (Ralstonia metallidurans).